The sequence spans 259 residues: MISPDAARNVVGIIGNVISFGLFLAPVPTFWRICKRKDVEEFKADPYLATLLNCMLWVFYGIPVVHPNSILVVTINGIGLLVEGTYLLIFFLYSPNKKRLRMCAVLGVELVFMLAVILGVLLGAHTHEKRSMIVGILCVFFGSIMYFSPLTIMGKVIKTKSVEYMPFFLSLVCFLNGVCWTAYALIRFDIYVTIPNGLGALFGAIQLILYACYYRTTPKKTKAAKDVEMPSVVVSGTGAAAAAGGGNTGGGSISVTVER.

Over 1–9 (MISPDAARN) the chain is Extracellular. A helical transmembrane segment spans residues 10–30 (VVGIIGNVISFGLFLAPVPTF). Residues 10-98 (VVGIIGNVIS…IFFLYSPNKK (89 aa)) enclose the MtN3/slv 1 domain. Residues 31–45 (WRICKRKDVEEFKAD) are Cytoplasmic-facing. Residues 46 to 66 (PYLATLLNCMLWVFYGIPVVH) traverse the membrane as a helical segment. Residues 67–69 (PNS) are Extracellular-facing. The chain crosses the membrane as a helical span at residues 70 to 90 (ILVVTINGIGLLVEGTYLLIF). The Cytoplasmic portion of the chain corresponds to 91–103 (FLYSPNKKRLRMC). The helical transmembrane segment at 104–124 (AVLGVELVFMLAVILGVLLGA) threads the bilayer. At 125–131 (HTHEKRS) the chain is on the extracellular side. Residues 132–152 (MIVGILCVFFGSIMYFSPLTI) traverse the membrane as a helical segment. Positions 133-216 (IVGILCVFFG…LILYACYYRT (84 aa)) constitute a MtN3/slv 2 domain. Over 153–165 (MGKVIKTKSVEYM) the chain is Cytoplasmic. Residues 166 to 186 (PFFLSLVCFLNGVCWTAYALI) traverse the membrane as a helical segment. The Extracellular segment spans residues 187–189 (RFD). Residues 190–210 (IYVTIPNGLGALFGAIQLILY) form a helical membrane-spanning segment. Residues 211–259 (ACYYRTTPKKTKAAKDVEMPSVVVSGTGAAAAAGGGNTGGGSISVTVER) lie on the Cytoplasmic side of the membrane.

It belongs to the SWEET sugar transporter family. In terms of assembly, forms homooligomers and/or heterooligomers.

It localises to the cell membrane. Mediates both low-affinity uptake and efflux of sugar across the plasma membrane. In Oryza sativa subsp. indica (Rice), this protein is Bidirectional sugar transporter SWEET6a (SWEET6A).